Consider the following 212-residue polypeptide: Ribosomal RNA small subunit methyltransferase G (212 aa).

Residues Gly76, Met81, 127-128, and Arg145 contribute to the S-adenosyl-L-methionine site; that span reads VE.

It belongs to the methyltransferase superfamily. RNA methyltransferase RsmG family.

The protein resides in the cytoplasm. The enzyme catalyses guanosine(527) in 16S rRNA + S-adenosyl-L-methionine = N(7)-methylguanosine(527) in 16S rRNA + S-adenosyl-L-homocysteine. In terms of biological role, specifically methylates the N7 position of guanine in position 527 of 16S rRNA. This chain is Ribosomal RNA small subunit methyltransferase G, found in Acinetobacter baylyi (strain ATCC 33305 / BD413 / ADP1).